The sequence spans 872 residues: Bifunctional uridylyltransferase/uridylyl-removing enzyme (872 aa).

The uridylyltransferase stretch occupies residues 1 to 332 (MALPNKVKKL…PKHHQPIIQE (332 aa)). Positions 333–691 (LDRNFERIGN…VSNKAMHGGT (359 aa)) are uridylyl-removing. An HD domain is found at 450–572 (VDEHTHRLIN…VKTERQLDYL (123 aa)). ACT domains lie at 692–773 (QVFV…FKKN) and 799–872 (LIEI…AETE).

It belongs to the GlnD family. Mg(2+) is required as a cofactor.

It catalyses the reaction [protein-PII]-L-tyrosine + UTP = [protein-PII]-uridylyl-L-tyrosine + diphosphate. The enzyme catalyses [protein-PII]-uridylyl-L-tyrosine + H2O = [protein-PII]-L-tyrosine + UMP + H(+). Its activity is regulated as follows. Uridylyltransferase (UTase) activity is inhibited by glutamine, while glutamine activates uridylyl-removing (UR) activity. Functionally, modifies, by uridylylation and deuridylylation, the PII regulatory proteins (GlnB and homologs), in response to the nitrogen status of the cell that GlnD senses through the glutamine level. Under low glutamine levels, catalyzes the conversion of the PII proteins and UTP to PII-UMP and PPi, while under higher glutamine levels, GlnD hydrolyzes PII-UMP to PII and UMP (deuridylylation). Thus, controls uridylylation state and activity of the PII proteins, and plays an important role in the regulation of nitrogen assimilation and metabolism. The polypeptide is Bifunctional uridylyltransferase/uridylyl-removing enzyme (Pseudoalteromonas translucida (strain TAC 125)).